A 222-amino-acid polypeptide reads, in one-letter code: Deoxyribose-phosphate aldolase (222 aa).

The active-site Proton donor/acceptor is the D93. Residue K156 is the Schiff-base intermediate with acetaldehyde of the active site. K186 serves as the catalytic Proton donor/acceptor.

This sequence belongs to the DeoC/FbaB aldolase family. DeoC type 1 subfamily.

It localises to the cytoplasm. It catalyses the reaction 2-deoxy-D-ribose 5-phosphate = D-glyceraldehyde 3-phosphate + acetaldehyde. Its pathway is carbohydrate degradation; 2-deoxy-D-ribose 1-phosphate degradation; D-glyceraldehyde 3-phosphate and acetaldehyde from 2-deoxy-alpha-D-ribose 1-phosphate: step 2/2. Its function is as follows. Catalyzes a reversible aldol reaction between acetaldehyde and D-glyceraldehyde 3-phosphate to generate 2-deoxy-D-ribose 5-phosphate. The protein is Deoxyribose-phosphate aldolase of Nocardia farcinica (strain IFM 10152).